The primary structure comprises 360 residues: Lipid-A-disaccharide synthase (360 aa).

It belongs to the LpxB family.

It catalyses the reaction a lipid X + a UDP-2-N,3-O-bis[(3R)-3-hydroxyacyl]-alpha-D-glucosamine = a lipid A disaccharide + UDP + H(+). It participates in bacterial outer membrane biogenesis; LPS lipid A biosynthesis. In terms of biological role, condensation of UDP-2,3-diacylglucosamine and 2,3-diacylglucosamine-1-phosphate to form lipid A disaccharide, a precursor of lipid A, a phosphorylated glycolipid that anchors the lipopolysaccharide to the outer membrane of the cell. The protein is Lipid-A-disaccharide synthase of Helicobacter pylori (strain P12).